A 498-amino-acid polypeptide reads, in one-letter code: Glycerol kinase (498 aa).

Threonine 11 is an ADP binding site. ATP is bound by residues threonine 11, threonine 12, and serine 13. Residue threonine 11 coordinates sn-glycerol 3-phosphate. Arginine 15 is a binding site for ADP. Residues arginine 81, glutamate 82, tyrosine 133, and aspartate 242 each coordinate sn-glycerol 3-phosphate. 5 residues coordinate glycerol: arginine 81, glutamate 82, tyrosine 133, aspartate 242, and glutamine 243. Residues threonine 264 and glycine 307 each contribute to the ADP site. ATP is bound by residues threonine 264, glycine 307, glutamine 311, and glycine 411. Glycine 411 provides a ligand contact to ADP.

The protein belongs to the FGGY kinase family.

It catalyses the reaction glycerol + ATP = sn-glycerol 3-phosphate + ADP + H(+). Its pathway is polyol metabolism; glycerol degradation via glycerol kinase pathway; sn-glycerol 3-phosphate from glycerol: step 1/1. Inhibited by fructose 1,6-bisphosphate (FBP). Its function is as follows. Key enzyme in the regulation of glycerol uptake and metabolism. Catalyzes the phosphorylation of glycerol to yield sn-glycerol 3-phosphate. This chain is Glycerol kinase, found in Afipia carboxidovorans (strain ATCC 49405 / DSM 1227 / KCTC 32145 / OM5) (Oligotropha carboxidovorans).